Consider the following 414-residue polypeptide: Multifunctional CCA protein (414 aa).

Gly8 and Arg11 together coordinate ATP. CTP is bound by residues Gly8 and Arg11. Asp21 and Asp23 together coordinate Mg(2+). ATP contacts are provided by Arg91, Arg143, and Arg146. Arg91, Arg143, and Arg146 together coordinate CTP. An HD domain is found at 232–333; the sequence is TGVHVMMVID…TRLVERCDAL (102 aa).

The protein belongs to the tRNA nucleotidyltransferase/poly(A) polymerase family. Bacterial CCA-adding enzyme type 1 subfamily. As to quaternary structure, monomer. Can also form homodimers and oligomers. Mg(2+) serves as cofactor. Requires Ni(2+) as cofactor.

It carries out the reaction a tRNA precursor + 2 CTP + ATP = a tRNA with a 3' CCA end + 3 diphosphate. It catalyses the reaction a tRNA with a 3' CCA end + 2 CTP + ATP = a tRNA with a 3' CCACCA end + 3 diphosphate. In terms of biological role, catalyzes the addition and repair of the essential 3'-terminal CCA sequence in tRNAs without using a nucleic acid template. Adds these three nucleotides in the order of C, C, and A to the tRNA nucleotide-73, using CTP and ATP as substrates and producing inorganic pyrophosphate. tRNA 3'-terminal CCA addition is required both for tRNA processing and repair. Also involved in tRNA surveillance by mediating tandem CCA addition to generate a CCACCA at the 3' terminus of unstable tRNAs. While stable tRNAs receive only 3'-terminal CCA, unstable tRNAs are marked with CCACCA and rapidly degraded. This is Multifunctional CCA protein from Cupriavidus metallidurans (strain ATCC 43123 / DSM 2839 / NBRC 102507 / CH34) (Ralstonia metallidurans).